We begin with the raw amino-acid sequence, 273 residues long: F-actin-capping protein subunit alpha (273 aa).

It belongs to the F-actin-capping protein alpha subunit family. In terms of assembly, component of the F-actin capping complex, composed of a heterodimer of an alpha and a beta subunit.

Its subcellular location is the cytoplasm. It is found in the cytoskeleton. The protein localises to the actin patch. Functionally, F-actin-capping proteins bind in a Ca(2+)-independent manner to the fast growing ends of actin filaments (barbed end) thereby blocking the exchange of subunits at these ends. Unlike other capping proteins (such as gelsolin and severin), these proteins do not sever actin filaments. The sequence is that of F-actin-capping protein subunit alpha (cap1) from Aspergillus oryzae (strain ATCC 42149 / RIB 40) (Yellow koji mold).